A 441-amino-acid polypeptide reads, in one-letter code: Alpha-monoglucosyldiacylglycerol synthase (441 aa).

It belongs to the glycosyltransferase group 1 family. Glycosyltransferase 4 subfamily. Requires Mg(2+) as cofactor.

Its subcellular location is the cell membrane. It catalyses the reaction a 1,2-diacyl-sn-glycerol + UDP-alpha-D-glucose = a 1,2-diacyl-3-O-(alpha-D-glucopyranosyl)-sn-glycerol + UDP + H(+). Activated by the negatively charged lipid phosphatidylglycerol (PG). Functionally, glucosyltransferase involved in the biosynthesis of the non-bilayer-prone membrane lipid alpha-monoglucosyldiacylglycerol. This is a major component for maintaining a certain anionic lipid surface charge density, for balancing the bilayer to non-bilayer phase equilibria and for keeping a constant lipid bilayer spontaneous curvature (curvature packing stress). Catalyzes the transfer of a glucosyl residue from UDP-Glc to diacylglycerol (DAG) acceptor to form the corresponding alpha-glucosyl-DAG (1,2-diacyl-3-O-(alpha-D-glucopyranosyl)-sn-glycerol). It can only use UDP-Glc as sugar donor. The protein is Alpha-monoglucosyldiacylglycerol synthase of Streptococcus pneumoniae (strain ATCC BAA-255 / R6).